We begin with the raw amino-acid sequence, 244 residues long: Carboxy-S-adenosyl-L-methionine synthase (244 aa).

Residues tyrosine 41, glycine 66–serine 68, aspartate 91–asparagine 92, asparagine 134, and arginine 201 each bind S-adenosyl-L-methionine.

This sequence belongs to the class I-like SAM-binding methyltransferase superfamily. Cx-SAM synthase family. As to quaternary structure, homodimer.

The enzyme catalyses prephenate + S-adenosyl-L-methionine = carboxy-S-adenosyl-L-methionine + 3-phenylpyruvate + H2O. In terms of biological role, catalyzes the conversion of S-adenosyl-L-methionine (SAM) to carboxy-S-adenosyl-L-methionine (Cx-SAM). This Colwellia psychrerythraea (strain 34H / ATCC BAA-681) (Vibrio psychroerythus) protein is Carboxy-S-adenosyl-L-methionine synthase.